The following is a 557-amino-acid chain: Inositol-3-phosphate synthase 1 (557 aa).

G67, G68, N69, N70, D141, S177, V178, Q188, R191, T228, A229, N230, T231, G278, S279, D303, S306, N337, N338, D339, and K352 together coordinate NAD(+). Position 279 is a phosphoserine (S279). The residue at position 357 (S357) is a Phosphoserine. NAD(+) is bound by residues G390, D391, D419, and S420. The interval 514 to 557 (GIKPEEVKATSPLPCKKESTPATNGCTGDANGHTQAPTPELSTA) is disordered. A Phosphoserine modification is found at S524. The segment covering 533 to 557 (TPATNGCTGDANGHTQAPTPELSTA) has biased composition (polar residues).

It belongs to the myo-inositol 1-phosphate synthase family. Homotrimer. NAD(+) is required as a cofactor. Phosphorylation at Ser-524 does not appear to affect enzyme activity, and is detected in brain and testis. Expressed in testis, brain and epididymis (at protein level). Moderately expressed in brain, lung, liver, and kidney. Low expression in heart and spleen. Very low expression in skeletal muscle. In terms of tissue distribution, expressed in testis, spleen, heart, brainstem, hippocampus, cerebellum, cortex and amygdala. Absent or very lowly expressed in intestine, lung and muscle. As to expression, expressed in intestine, lung, liver, muscle, testis, spleen, brainstem, hippocampus, cerebellum, cortex and amygdala. Absent or lowly expressed in heart and kidney. Expressed in intestine (at protein level).

Its subcellular location is the cytoplasm. The enzyme catalyses D-glucose 6-phosphate = 1D-myo-inositol 3-phosphate. It functions in the pathway polyol metabolism; myo-inositol biosynthesis; myo-inositol from D-glucose 6-phosphate: step 1/2. Inhibited by 2-deoxyglucitol 6-phosphate (dgtolP) and 2-deoxy-D-glucose 6-phosphate. Inhibited by copper, mercury, cadmium, zinc and copper ions. Activated by potassium and ammonium ions. Key enzyme in myo-inositol biosynthesis pathway that catalyzes the conversion of glucose 6-phosphate to 1-myo-inositol 1-phosphate in a NAD-dependent manner. Rate-limiting enzyme in the synthesis of all inositol-containing compounds. Its function is as follows. Key enzyme in myo-inositol biosynthesis pathway that catalyzes the conversion of glucose 6-phosphate to 1-myo-inositol 1-phosphate in a NAD-dependent manner. In terms of biological role, competitively inhibits the function of isoform 1, presumably by competing for NAD cofactor. The polypeptide is Inositol-3-phosphate synthase 1 (Isyna1) (Rattus norvegicus (Rat)).